The chain runs to 231 residues: Eukaryotic translation initiation factor 4E allele Eva1 (231 aa).

Basic and acidic residues predominate over residues 1 to 20 (MAAAEMERTTSFDAAEKLKA). Positions 1-34 (MAAAEMERTTSFDAAEKLKAADAGGGEVDDELEE) are disordered. 2 EIF4G-binding regions span residues 56-59 (HPLE) and 66-102 (FDNP…NNIH). MRNA contacts are provided by residues 74–79 (RQIDWG), Lys106, and 124–125 (WE). Cys129 and Cys167 are disulfide-bonded. The segment at 150–159 (YTLLAMIGHQ) is EIF4G-binding. Residues 174–179 (RVKGEK) and 219–223 (KRLDR) each bind mRNA.

The protein belongs to the eukaryotic initiation factor 4E family. As to quaternary structure, EIF4F is a multi-subunit complex, the composition of which varies with external and internal environmental conditions. It is composed of at least EIF4A, EIF4E and EIF4G. EIF4E is also known to interact with other partners. In higher plants two isoforms of EIF4F have been identified, named isoform EIF4F and isoform EIF(iso)4F. Isoform EIF4F has subunits p220 and p26, whereas isoform EIF(iso)4F has subunits p82 and p28. In terms of assembly, (Microbial infection) Interacts with potyvirus viral genome-linked protein (VPg); this interaction is possible in susceptible hosts but impaired in resistant plants. Post-translationally, according to the redox status, the Cys-129-Cys-167 disulfide bridge may have a role in regulating protein function by affecting its ability to bind capped mRNA.

The protein localises to the nucleus. The protein resides in the cytoplasm. Component of the protein complex eIF4F, which is involved in the recognition of the mRNA cap, ATP-dependent unwinding of 5'-terminal secondary structure and recruitment of mRNA to the ribosome. Recognizes and binds the 7-methylguanosine-containing mRNA cap during an early step in the initiation of protein synthesis and facilitates ribosome binding by inducing the unwinding of the mRNAs secondary structures. Key component of recessive resistance to potyviruses. Its function is as follows. (Microbial infection) Susceptibility host factor required for viral infection (e.g. Potato virus Y (PVY)) by recruiting viral RNAs to the host ribosomal complex via an interaction with viral genome-linked protein (VPg). Displayed sequence is the allele Eva1 that confers resistance to potato virus Y (PVY) by failing to interact with the viral VPg protein. The sequence is that of Eukaryotic translation initiation factor 4E allele Eva1 from Solanum etuberosum (Wild potato).